A 386-amino-acid chain; its full sequence is Microtubule-binding protein TANGLED1 (386 aa).

Disordered stretches follow at residues arginine 83–glycine 105, alanine 140–serine 202, histidine 244–leucine 266, proline 303–serine 330, and arginine 345–arginine 386. The span at arginine 170–histidine 180 shows a compositional bias: basic residues. Residues arginine 181 to threonine 193 show a composition bias toward low complexity. Positions threonine 375–arginine 386 are enriched in polar residues.

Expressed in vegetative shoot tips consisting of leaf primordia and the bases of immature leaves, the shoot apical meristem, and unexpanded stem tissue. Strongly expressed in tissues enriched in dividing cells: ear primordia and embryos.

It localises to the cytoplasm. Its subcellular location is the cytoskeleton. The protein resides in the spindle. The protein localises to the phragmoplast. Its function is as follows. Is required for spatial control cell division during leaf development. Through an association with microtubules, acts both for the positioning of cytoskeletal arrays that establish planes of cell division during prophase and for spatial guidance of expanding phragmoplasts toward preestablished cortical division sites (CDS) during cytokinesis. In Zea mays (Maize), this protein is Microtubule-binding protein TANGLED1 (TAN1).